Reading from the N-terminus, the 479-residue chain is MAQHAVYFPDAFLTQMREAMPSTLSFDEFISACQRPLRRSIRINTLKISVADFLALIAPYGWSLTPIPWCHEGFWIERDDEEALPLGSTAEHLSGLFYIQEASSMLPVAALFADDNHPQRVMDMAAAPGSKTTQIAARMGNRGAILANEFSASRVKVLHANISRCGIANTALTHFDGRVFGAALPEMFDAILLDAPCSGEGVVRKDPDALKNWSPESNLDIAATQRELLDSAFHALRPGGTLVYSTCTLNRQENEAVCLWLKETYADAVEFLPLGDLFPDADRALTPEGFLHVFPQIYDCEGFFVARLRKMSSLPAMPAPGYKVGAFPFTPLKGREALHVTQAANAVGLLWDENLHLWQRDKEVWLFPAEIESLIGKVRFSRLGIKLAESHNKGYRWQHEATIALACPTHAHAFELSAQEAEEWYRGRDIYPQTPPAADDVLVTFQHQPLGLAKRIGARIKNSYPRELVRDGKLFTGNS.

S-adenosyl-L-methionine contacts are provided by residues 125–131, Glu149, Asp176, and Asp194; that span reads AAAPGSK. The active-site Nucleophile is Cys247.

It belongs to the class I-like SAM-binding methyltransferase superfamily. RsmB/NOP family.

The protein resides in the cytoplasm. The catalysed reaction is cytidine(1407) in 16S rRNA + S-adenosyl-L-methionine = 5-methylcytidine(1407) in 16S rRNA + S-adenosyl-L-homocysteine + H(+). Specifically methylates the cytosine at position 1407 (m5C1407) of 16S rRNA. The chain is Ribosomal RNA small subunit methyltransferase F from Salmonella schwarzengrund (strain CVM19633).